We begin with the raw amino-acid sequence, 1146 residues long: Large proline-rich protein BAG6 (1146 aa).

At methionine 1 the chain carries N-acetylmethionine. The Ubiquitin-like domain maps to 17–92 (LEVLVKTLDS…HLVERAPPQT (76 aa)). Disordered regions lie at residues 87 to 128 (RAPP…HDRN), 186 to 268 (RGGT…HPSP), 381 to 436 (TMTG…TSHP), 457 to 525 (QDSG…QGAG), and 555 to 618 (PGMA…SAAD). Serine 96 carries the phosphoserine modification. The span at 96–108 (SGASSGTGSASAT) shows a compositional bias: low complexity. Positions 109 to 122 (HGGGPLPGTRGPGA) are enriched in gly residues. Residue threonine 117 is modified to Phosphothreonine. The segment covering 208 to 217 (VALNSQTSEP) has biased composition (polar residues). A run of 2 repeats spans residues 236 to 265 (RPPT…APNH) and 410 to 438 (PSSA…HPRV). Residues 236–650 (RPPTQTPELP…LASPTITVAV (415 aa)) form a 4 X 29 AA approximate repeats region. A compositionally biased stretch (pro residues) spans 239-257 (TQTPELPPSGPAPAGPAPA). Residues 394–413 (GAEAASPGSGQASSLPPSSA) are compositionally biased toward low complexity. Pro residues-rich tracts occupy residues 422–433 (APPPGPAPPPAT) and 502–515 (PTPP…PGGP). Composition is skewed to low complexity over residues 555–573 (PGMA…AQAP) and 583–601 (PATA…TAGP). Tandem repeats lie at residues 589–616 (SAGT…QPSA) and 622–650 (SQLL…TVAV). Residues 603–614 (PGGPAQPPPPQP) show a composition bias toward pro residues. 2 disordered regions span residues 666–711 (ASQA…ESLP) and 961–1146 (PQAL…ADDP). Over residues 670-694 (APPPPPPPPPPPPAPEQQTTPPPGS) the composition is skewed to pro residues. Basic and acidic residues predominate over residues 977-986 (TSPEPQREDA). Residues serine 978 and serine 987 each carry the phosphoserine modification. Over residues 1021–1034 (AEPWAAAVPPEWVP) the composition is skewed to low complexity. The tract at residues 1024 to 1054 (WAAAVPPEWVPIIQQDIQSQRKVKPQPPLSD) is required for interaction with GET4. Residues 1026–1068 (AAVPPEWVPIIQQDIQSQRKVKPQPPLSDAYLSGMPAKRRKTM) carry the Nuclear localization site motif. The interval 1036–1146 (IQQDIQSQRK…NAHRAFADDP (111 aa)) is sufficient for the delivery of client proteins to the endoplasmic reticulum. Phosphothreonine is present on threonine 1067. The tract at residues 1072-1129 (GPQLLLSEAVSRAAKAAGARPLTSPESLSRDLEAPEVQESYRQQLRSDIQKRLQEDPN) is BAG-similar domain, required and sufficient for interaction with UBL4A. Positions 1080–1090 (AVSRAAKAAGA) are enriched in low complexity. 2 positions are modified to phosphoserine: serine 1095 and serine 1131.

As to quaternary structure, component of the BAG6/BAT3 complex, also named BAT3 complex, at least composed of BAG6, UBL4A and GET4/TRC35. Interacts with GET4; the interaction is direct and localizes BAG6 in the cytosol. Interacts with UBL4A; the interaction is direct and required for UBL4A protein stability. Interacts with AIFM1. Interacts with HSPA2. Interacts with CTCFL. Interacts with p300/EP300. Interacts (via ubiquitin-like domain) with RNF126; required for BAG6-dependent ubiquitination of proteins mislocalized to the cytosol. Interacts (via ubiquitin-like domain) with SGTA; SGTA competes with RNF126 by binding the same region of BAG6, thereby promoting deubiquitination of BAG6-target proteins and rescuing them from degradation. Interacts with ricin A chain. Interacts with VCP and AMFR; both form the VCP/p97-AMFR/gp78 complex. Interacts with SYVN1. Interacts with USP13; the interaction is direct and may mediate UBL4A deubiquitination. Interacts with ZFAND2B. Interacts with KPNA2. Interacts with UBQLN4. In terms of processing, ricin can induce a cleavage by the caspase CASP3. The released C-terminal peptide induces apoptosis.

It localises to the cytoplasm. The protein localises to the cytosol. Its subcellular location is the nucleus. It is found in the secreted. The protein resides in the extracellular exosome. Its function is as follows. ATP-independent molecular chaperone preventing the aggregation of misfolded and hydrophobic patches-containing proteins. Functions as part of a cytosolic protein quality control complex, the BAG6/BAT3 complex, which maintains these client proteins in a soluble state and participates in their proper delivery to the endoplasmic reticulum or alternatively can promote their sorting to the proteasome where they undergo degradation. The BAG6/BAT3 complex is involved in the post-translational delivery of tail-anchored/type II transmembrane proteins to the endoplasmic reticulum membrane. Recruited to ribosomes, it interacts with the transmembrane region of newly synthesized tail-anchored proteins and together with SGTA and ASNA1 mediates their delivery to the endoplasmic reticulum. Client proteins that cannot be properly delivered to the endoplasmic reticulum are ubiquitinated by RNF126, an E3 ubiquitin-protein ligase associated with BAG6 and are sorted to the proteasome. SGTA which prevents the recruitment of RNF126 to BAG6 may negatively regulate the ubiquitination and the proteasomal degradation of client proteins. Similarly, the BAG6/BAT3 complex also functions as a sorting platform for proteins of the secretory pathway that are mislocalized to the cytosol either delivering them to the proteasome for degradation or to the endoplasmic reticulum. The BAG6/BAT3 complex also plays a role in the endoplasmic reticulum-associated degradation (ERAD), a quality control mechanism that eliminates unwanted proteins of the endoplasmic reticulum through their retrotranslocation to the cytosol and their targeting to the proteasome. It maintains these retrotranslocated proteins in an unfolded yet soluble state condition in the cytosol to ensure their proper delivery to the proteasome. BAG6 is also required for selective ubiquitin-mediated degradation of defective nascent chain polypeptides by the proteasome. In this context, it may participate in the production of antigenic peptides and play a role in antigen presentation in immune response. BAG6 is also involved in endoplasmic reticulum stress-induced pre-emptive quality control, a mechanism that selectively attenuates the translocation of newly synthesized proteins into the endoplasmic reticulum and reroutes them to the cytosol for proteasomal degradation. BAG6 may ensure the proper degradation of these proteins and thereby protects the endoplasmic reticulum from protein overload upon stress. By inhibiting the polyubiquitination and subsequent proteasomal degradation of HSPA2 it may also play a role in the assembly of the synaptonemal complex during spermatogenesis. Also positively regulates apoptosis by interacting with and stabilizing the proapoptotic factor AIFM1. By controlling the steady-state expression of the IGF1R receptor, indirectly regulates the insulin-like growth factor receptor signaling pathway. Functionally, involved in DNA damage-induced apoptosis: following DNA damage, accumulates in the nucleus and forms a complex with p300/EP300, enhancing p300/EP300-mediated p53/TP53 acetylation leading to increase p53/TP53 transcriptional activity. When nuclear, may also act as a component of some chromatin regulator complex that regulates histone 3 'Lys-4' dimethylation (H3K4me2). Released extracellularly via exosomes, it is a ligand of the natural killer/NK cells receptor NCR3 and stimulates NK cells cytotoxicity. It may thereby trigger NK cells cytotoxicity against neighboring tumor cells and immature myeloid dendritic cells (DC). In terms of biological role, may mediate ricin-induced apoptosis. This is Large proline-rich protein BAG6 from Rattus norvegicus (Rat).